Consider the following 415-residue polypeptide: Methylaspartate ammonia-lyase 2 (415 aa).

A (2S,3S)-3-methyl-L-aspartate-binding site is contributed by Q173. Mg(2+) contacts are provided by D238, E273, and D307. A (2S,3S)-3-methyl-L-aspartate-binding site is contributed by Q329. K331 serves as the catalytic Proton acceptor. 360–361 contacts (2S,3S)-3-methyl-L-aspartate; the sequence is TC.

Belongs to the methylaspartate ammonia-lyase family. In terms of assembly, homodimer. The cofactor is Mg(2+).

The enzyme catalyses (2S,3S)-3-methyl-L-aspartate = mesaconate + NH4(+). It functions in the pathway amino-acid degradation; L-glutamate degradation via mesaconate pathway; acetate and pyruvate from L-glutamate: step 2/4. Involved in the methylaspartate cycle. Catalyzes the formation of the alpha,beta-unsaturated bond by the reversible anti elimination of ammonia from L-threo-beta-methylaspartate (L-threo-(2S,3S)-3-methylaspartate) to give mesaconate. The chain is Methylaspartate ammonia-lyase 2 from Carboxydothermus hydrogenoformans (strain ATCC BAA-161 / DSM 6008 / Z-2901).